The primary structure comprises 125 residues: Large ribosomal subunit protein mL51 (125 aa).

The N-terminal 29 residues, 1–29 (MWSVQQLLWGCRSLLTQGCRSFSLGSRDL), are a transit peptide targeting the mitochondrion.

This sequence belongs to the mitochondrion-specific ribosomal protein mL51 family. Component of the mitochondrial ribosome large subunit (39S) which comprises a 16S rRNA and about 50 distinct proteins.

It localises to the mitochondrion. The protein is Large ribosomal subunit protein mL51 (mrpl51) of Xenopus tropicalis (Western clawed frog).